Here is a 483-residue protein sequence, read N- to C-terminus: Probable zinc metalloprotease PTT_08196 (483 aa).

The first 18 residues, 1 to 18, serve as a signal peptide directing secretion; the sequence is MLFRSVILSNALLLPACA. Residues Asn-96 and Asn-121 are each glycosylated (N-linked (GlcNAc...) asparagine). Positions 167, 187, and 220 each coordinate Zn(2+). Asn-235 carries N-linked (GlcNAc...) asparagine glycosylation. Zn(2+) is bound at residue Asp-247. Residues Asn-310, Asn-362, Asn-401, Asn-411, and Asn-421 are each glycosylated (N-linked (GlcNAc...) asparagine). The region spanning 396–483 is the Fibronectin type-III domain; that stretch reads PAMPRNVTID…KSPAVYPFPA (88 aa).

The protein belongs to the peptidase M28 family. M28B subfamily. Zn(2+) serves as cofactor.

Its subcellular location is the secreted. In Pyrenophora teres f. teres (strain 0-1) (Barley net blotch fungus), this protein is Probable zinc metalloprotease PTT_08196.